The following is a 202-amino-acid chain: Ribosome maturation factor RimM (202 aa).

Positions 121-202 (ADEYYWVDLI…CITVDWQPDY (82 aa)) constitute a PRC barrel domain.

Belongs to the RimM family. As to quaternary structure, binds ribosomal protein uS19.

It is found in the cytoplasm. An accessory protein needed during the final step in the assembly of 30S ribosomal subunit, possibly for assembly of the head region. Essential for efficient processing of 16S rRNA. May be needed both before and after RbfA during the maturation of 16S rRNA. It has affinity for free ribosomal 30S subunits but not for 70S ribosomes. This chain is Ribosome maturation factor RimM, found in Polaromonas naphthalenivorans (strain CJ2).